The chain runs to 1446 residues: Centrosomal protein of 164 kDa (1446 aa).

Residues 1–195 form an interaction with ATRIP region; it reads MARRPILLGD…PPQGLKAAAC (195 aa). A WW domain is found at 56–89; it reads APLPKGWKPCQNITGDLYYFNFDTGQSIWDHPCD. Disordered stretches follow at residues 106 to 132 and 159 to 185; these read PGAI…SKSP and PPSA…EPTL. Residues 109-121 are compositionally biased toward basic residues; that stretch reads IKKKDKKKKKEKK. The span at 164-176 shows a compositional bias: polar residues; the sequence is RGSQSVSLGSSAD. Position 202 is a phosphoserine (Ser-202). Disordered stretches follow at residues 217–238, 250–408, 424–570, and 830–849; these read EETN…SSEL, GGNF…SFLG, GDTL…EPAA, and KRQE…KEEH. Over residues 218 to 228 the composition is skewed to acidic residues; that stretch reads ETNEEDEEESD. Over residues 257-277 the composition is skewed to basic and acidic residues; sequence ESPRTSQPDKKDVSLDSDADR. The segment covering 288-312 has biased composition (polar residues); it reads GADSSVASANGSKSQGRGASPWNPQ. Composition is skewed to basic and acidic residues over residues 355-372 and 384-397; these read KEGE…KEAS and SEIH…RHSG. Polar residues predominate over residues 451-461; sequence SSIAEPQSKHT. Composition is skewed to basic and acidic residues over residues 490 to 499 and 525 to 534; these read PEWKEAEGPG and ERAEEKHSQA. The stretch at 1143 to 1197 forms a coiled coil; it reads EVLGNMRKNLNEETRHLDEMKSAMRKGHDLLKKKEEKLIQLESSLQEEVSDEDTL. The tract at residues 1261–1287 is disordered; sequence LGSLNSQPPPQGLGSQPPPPLFTSSLR. Residues 1267–1281 are compositionally biased toward pro residues; that stretch reads QPPPQGLGSQPPPPL. Phosphoserine occurs at positions 1369 and 1371.

Interacts (via N-terminus) with ATRIP. Interacts with ATM, ATR and MDC1. Interacts with XPA (via N-terminus) upon UV irradiation. Interacts with CEP83, CCDC92, TTBK2, DVL3, NPHP3 and weakly with NPHP4. Interacts with DZIP1.

It is found in the cytoplasm. Its subcellular location is the cytoskeleton. It localises to the microtubule organizing center. The protein resides in the centrosome. The protein localises to the centriole. It is found in the nucleus. Plays a role in microtubule organization and/or maintenance for the formation of primary cilia (PC), a microtubule-based structure that protrudes from the surface of epithelial cells. Plays a critical role in G2/M checkpoint and nuclear divisions. A key player in the DNA damage-activated ATR/ATM signaling cascade since it is required for the proper phosphorylation of H2AX, RPA, CHEK2 and CHEK1. Plays a critical role in chromosome segregation, acting as a mediator required for the maintenance of genomic stability through modulation of MDC1, RPA and CHEK1. The polypeptide is Centrosomal protein of 164 kDa (Mus musculus (Mouse)).